A 315-amino-acid polypeptide reads, in one-letter code: Methionyl-tRNA formyltransferase (315 aa).

113–116 provides a ligand contact to (6S)-5,6,7,8-tetrahydrofolate; the sequence is SLLP.

It belongs to the Fmt family.

It carries out the reaction L-methionyl-tRNA(fMet) + (6R)-10-formyltetrahydrofolate = N-formyl-L-methionyl-tRNA(fMet) + (6S)-5,6,7,8-tetrahydrofolate + H(+). Functionally, attaches a formyl group to the free amino group of methionyl-tRNA(fMet). The formyl group appears to play a dual role in the initiator identity of N-formylmethionyl-tRNA by promoting its recognition by IF2 and preventing the misappropriation of this tRNA by the elongation apparatus. The chain is Methionyl-tRNA formyltransferase from Escherichia coli O127:H6 (strain E2348/69 / EPEC).